We begin with the raw amino-acid sequence, 76 residues long: Sec-independent protein translocase protein TatA (76 aa).

A helical transmembrane segment spans residues 1 to 21 (MGGLSIWHWLIVLLIVALVFG). The interval 40–76 (KDGMKEGETPADAQQLPRSGAVDVNAKETTRSDSNKA) is disordered. Over residues 64-76 (NAKETTRSDSNKA) the composition is skewed to basic and acidic residues.

Belongs to the TatA/E family. As to quaternary structure, the Tat system comprises two distinct complexes: a TatABC complex, containing multiple copies of TatA, TatB and TatC subunits, and a separate TatA complex, containing only TatA subunits. Substrates initially bind to the TatABC complex, which probably triggers association of the separate TatA complex to form the active translocon.

Its subcellular location is the cell inner membrane. Part of the twin-arginine translocation (Tat) system that transports large folded proteins containing a characteristic twin-arginine motif in their signal peptide across membranes. TatA could form the protein-conducting channel of the Tat system. The polypeptide is Sec-independent protein translocase protein TatA (Burkholderia cenocepacia (strain HI2424)).